The primary structure comprises 260 residues: GTP cyclohydrolase FolE2 (260 aa).

The protein belongs to the GTP cyclohydrolase IV family.

The catalysed reaction is GTP + H2O = 7,8-dihydroneopterin 3'-triphosphate + formate + H(+). It functions in the pathway cofactor biosynthesis; 7,8-dihydroneopterin triphosphate biosynthesis; 7,8-dihydroneopterin triphosphate from GTP: step 1/1. Converts GTP to 7,8-dihydroneopterin triphosphate. The polypeptide is GTP cyclohydrolase FolE2 (Desulfosudis oleivorans (strain DSM 6200 / JCM 39069 / Hxd3) (Desulfococcus oleovorans)).